The following is a 447-amino-acid chain: Phosphoglucosamine mutase (447 aa).

The active-site Phosphoserine intermediate is the Ser-102. Positions 102, 241, 243, and 245 each coordinate Mg(2+). Ser-102 bears the Phosphoserine mark.

Belongs to the phosphohexose mutase family. Mg(2+) is required as a cofactor. In terms of processing, activated by phosphorylation.

It catalyses the reaction alpha-D-glucosamine 1-phosphate = D-glucosamine 6-phosphate. In terms of biological role, catalyzes the conversion of glucosamine-6-phosphate to glucosamine-1-phosphate. The chain is Phosphoglucosamine mutase from Pseudomonas savastanoi pv. phaseolicola (strain 1448A / Race 6) (Pseudomonas syringae pv. phaseolicola (strain 1448A / Race 6)).